The chain runs to 143 residues: Large ribosomal subunit protein uL15 (143 aa).

The tract at residues methionine 1–glycine 52 is disordered. Residues arginine 21–serine 31 are compositionally biased toward gly residues.

The protein belongs to the universal ribosomal protein uL15 family. In terms of assembly, part of the 50S ribosomal subunit.

Binds to the 23S rRNA. In Janthinobacterium sp. (strain Marseille) (Minibacterium massiliensis), this protein is Large ribosomal subunit protein uL15.